A 141-amino-acid polypeptide reads, in one-letter code: Large ribosomal subunit protein uL16 (141 aa).

A disordered region spans residues 1 to 21 (MLMPKRVKYRKQQRGHNRGMA).

The protein belongs to the universal ribosomal protein uL16 family. As to quaternary structure, part of the 50S ribosomal subunit.

In terms of biological role, binds 23S rRNA and is also seen to make contacts with the A and possibly P site tRNAs. The sequence is that of Large ribosomal subunit protein uL16 from Roseiflexus sp. (strain RS-1).